Here is a 267-residue protein sequence, read N- to C-terminus: MDRREFTASLVAGGCAGMCVDLTLFPLDTIKTRLQSQQGFYKAGGFRGIYAGVPSAAIGSFPNAAAFFVTYESTKSVFSGYTTTNLAPITHMLAASLGEIVACLIRVPTEVVKQRTQANPSISTYRVLLNSLQEEGFRGLYRGYGSTVLREIPFSLVQFPLWEYLKAVWWRRQGGRLDSWQAAVCGALAGGVAAFVTTPLDVAKTWIMLAKAGTSTASGNIPMVLCEVWRSRGIPGLFAGSIPRVMFISMGGFIFLGAYEKVRRTLL.

3 Solcar repeats span residues 4–77, 86–168, and 177–265; these read REFT…TKSV, LAPI…LKAV, and LDSW…VRRT. The next 6 helical transmembrane spans lie at 5–25, 49–69, 85–105, 142–162, 182–202, and 238–258; these read EFTASLVAGGCAGMCVDLTLF, IYAGVPSAAIGSFPNAAAFFV, NLAPITHMLAASLGEIVACLI, RGYGSTVLREIPFSLVQFPLW, AAVCGALAGGVAAFVTTPLDV, and FAGSIPRVMFISMGGFIFLGA.

The protein belongs to the mitochondrial carrier (TC 2.A.29) family.

Its subcellular location is the mitochondrion inner membrane. It carries out the reaction S-adenosyl-L-homocysteine(out) + S-adenosyl-L-methionine(in) = S-adenosyl-L-homocysteine(in) + S-adenosyl-L-methionine(out). Its function is as follows. Mitochondrial S-adenosyl-L-methionine/S-adenosyl-L-homocysteine antiporter. Mediates the exchange of cytosolic S-adenosyl-L-methionine, the predominant methyl-group donor for macromolecule methylation processes, for mitochondrial S-adenosylhomocysteine(SAH), a by-product of methylation reactions. In Danio rerio (Zebrafish), this protein is Mitochondrial S-adenosylmethionine carrier protein (slc25a26).